We begin with the raw amino-acid sequence, 798 residues long: Protocadherin beta-14 (798 aa).

Residues Met-1–Ala-26 form the signal peptide. Residues Gly-27–Leu-686 lie on the Extracellular side of the membrane. Cadherin domains lie at Val-35–Phe-133, Ile-138–Phe-242, Tyr-247–Val-347, Ile-352–Phe-451, and Tyr-456–Val-561. Residues Cys-96 and Cys-102 are joined by a disulfide bond. Asn-169 carries N-linked (GlcNAc...) asparagine glycosylation. N-linked (GlcNAc...) asparagine glycosylation is found at Asn-359, Asn-418, Asn-436, Asn-487, and Asn-567. A Cadherin 6 domain is found at Gly-568–Leu-671. A helical transmembrane segment spans residues Thr-687–Val-711. The Cytoplasmic segment spans residues Arg-712–Gln-798.

It localises to the cell membrane. Potential calcium-dependent cell-adhesion protein. May be involved in the establishment and maintenance of specific neuronal connections in the brain. The protein is Protocadherin beta-14 (PCDHB14) of Homo sapiens (Human).